The sequence spans 183 residues: Large ribosomal subunit protein uL6 (183 aa).

This sequence belongs to the universal ribosomal protein uL6 family. As to quaternary structure, part of the 50S ribosomal subunit.

This protein binds to the 23S rRNA, and is important in its secondary structure. It is located near the subunit interface in the base of the L7/L12 stalk, and near the tRNA binding site of the peptidyltransferase center. This Methanococcus aeolicus (strain ATCC BAA-1280 / DSM 17508 / OCM 812 / Nankai-3) protein is Large ribosomal subunit protein uL6.